A 567-amino-acid chain; its full sequence is Proline--tRNA ligase (567 aa).

Belongs to the class-II aminoacyl-tRNA synthetase family. ProS type 1 subfamily. As to quaternary structure, homodimer.

The protein resides in the cytoplasm. It carries out the reaction tRNA(Pro) + L-proline + ATP = L-prolyl-tRNA(Pro) + AMP + diphosphate. In terms of biological role, catalyzes the attachment of proline to tRNA(Pro) in a two-step reaction: proline is first activated by ATP to form Pro-AMP and then transferred to the acceptor end of tRNA(Pro). As ProRS can inadvertently accommodate and process non-cognate amino acids such as alanine and cysteine, to avoid such errors it has two additional distinct editing activities against alanine. One activity is designated as 'pretransfer' editing and involves the tRNA(Pro)-independent hydrolysis of activated Ala-AMP. The other activity is designated 'posttransfer' editing and involves deacylation of mischarged Ala-tRNA(Pro). The misacylated Cys-tRNA(Pro) is not edited by ProRS. In Streptomyces griseus subsp. griseus (strain JCM 4626 / CBS 651.72 / NBRC 13350 / KCC S-0626 / ISP 5235), this protein is Proline--tRNA ligase.